The sequence spans 82 residues: Small ribosomal subunit protein bS18 (82 aa).

The segment at 1–24 (MKRTNMKKARMEQSRRPKKNPLKA) is disordered.

This sequence belongs to the bacterial ribosomal protein bS18 family. In terms of assembly, part of the 30S ribosomal subunit. Forms a tight heterodimer with protein bS6.

Binds as a heterodimer with protein bS6 to the central domain of the 16S rRNA, where it helps stabilize the platform of the 30S subunit. This chain is Small ribosomal subunit protein bS18, found in Corynebacterium jeikeium (strain K411).